We begin with the raw amino-acid sequence, 122 residues long: Large ribosomal subunit protein bL12 (122 aa).

It belongs to the bacterial ribosomal protein bL12 family. Homodimer. Part of the ribosomal stalk of the 50S ribosomal subunit. Forms a multimeric L10(L12)X complex, where L10 forms an elongated spine to which 2 to 4 L12 dimers bind in a sequential fashion. Binds GTP-bound translation factors.

Its function is as follows. Forms part of the ribosomal stalk which helps the ribosome interact with GTP-bound translation factors. Is thus essential for accurate translation. The sequence is that of Large ribosomal subunit protein bL12 from Cellvibrio japonicus (strain Ueda107) (Pseudomonas fluorescens subsp. cellulosa).